The chain runs to 609 residues: Protein KINESIN LIGHT CHAIN-RELATED 1 (609 aa).

The disordered stretch occupies residues 1–77 (MPAMPGLVSV…TAAVIDVDDP (77 aa)). Residues 38–55 (KKTPSSTPSRSKPSPNRS) show a composition bias toward low complexity. 10 TPR repeats span residues 140–173 (AMSL…PDPT), 183–216 (FSGH…QIQT), 225–258 (GETC…HRAH), 267–301 (AADR…IASG), 307–340 (ASID…FKAS), 349–382 (ASVF…YNKP), 392–425 (AGGL…LEDK), 433–466 (AGLE…LRAA), 474–507 (GVVL…LEQE), and 516–549 (LGVY…REEK). Residues 582–609 (LQNLIDPNARPPKKESSAKKWPSLGFKF) are disordered.

This sequence belongs to the kinesin light chain family. As to quaternary structure, interacts with IQD1.

The protein localises to the cytoplasm. Its subcellular location is the cytoskeleton. This chain is Protein KINESIN LIGHT CHAIN-RELATED 1, found in Arabidopsis thaliana (Mouse-ear cress).